A 426-amino-acid chain; its full sequence is UPF0597 protein CLI_1810 (426 aa).

It belongs to the UPF0597 family.

The chain is UPF0597 protein CLI_1810 from Clostridium botulinum (strain Langeland / NCTC 10281 / Type F).